We begin with the raw amino-acid sequence, 344 residues long: Ion-translocating oxidoreductase complex subunit D (344 aa).

The next 4 membrane-spanning stretches (helical) occupy residues 23-43, 44-64, 77-99, and 120-140; these read LVLG…GPGT, LLNL…MLAL, SALV…WLTL, and PFNP…LEMT. The residue at position 172 (Thr-172) is an FMN phosphoryl threonine. Helical transmembrane passes span 198 to 218, 222 to 242, 252 to 272, 285 to 305, and 306 to 326; these read LGSA…LFLL, LFTW…SLLF, GSPL…FIVT, LVFG…GGYP, and DGVA…DYYT.

This sequence belongs to the NqrB/RnfD family. As to quaternary structure, the complex is composed of six subunits: RnfA, RnfB, RnfC, RnfD, RnfE and RnfG. FMN serves as cofactor.

The protein localises to the cell inner membrane. In terms of biological role, part of a membrane-bound complex that couples electron transfer with translocation of ions across the membrane. The protein is Ion-translocating oxidoreductase complex subunit D of Pseudomonas aeruginosa (strain UCBPP-PA14).